The chain runs to 553 residues: Solute carrier family 22 member 4 (553 aa).

Residues 1-20 (MRDYDEVIAFLGEWGPFQRL) lie on the Cytoplasmic side of the membrane. A helical membrane pass occupies residues 21-41 (IFFLLSASIIPNGFNGMSVVF). Residues 42 to 142 (LAGTPEHRCL…NLVCEDDWKT (101 aa)) are Extracellular-facing. Asn57, Asn64, and Asn91 each carry an N-linked (GlcNAc...) asparagine glycan. Residues 143–163 (PLTTSLFFVGVLCGSFVSGQL) form a helical membrane-spanning segment. At 164–171 (SDRFGRKK) the chain is on the cytoplasmic side. Residues 172–192 (VLFATMAVQTGFSFVQIFSTN) traverse the membrane as a helical segment. At 193-197 (WEMFT) the chain is on the extracellular side. A helical transmembrane segment spans residues 198 to 218 (VLFAIVGMGQISNYVVAFILG). 218–225 (GTEILSKS) is an ATP binding site. At 219–232 (TEILSKSVRIIFST) the chain is on the cytoplasmic side. Residues 233-253 (LGVCTFFAIGYMVLPLFAYFI) form a helical membrane-spanning segment. Over 254-257 (RDWR) the chain is Extracellular. A helical membrane pass occupies residues 258–278 (MLLLALTLPGLFCVPLWWFIP). The Cytoplasmic portion of the chain corresponds to 279–339 (ESPRWLISQR…IILDLFRTRN (61 aa)). A helical membrane pass occupies residues 340 to 360 (IATITVMAVMLWMLTSVGYFA). Residues 361-373 (LSLNVPNLHGDVY) lie on the Extracellular side of the membrane. A helical transmembrane segment spans residues 374–394 (LNCFLSGLIEVPAYFTAWLLL). Residues 395-400 (RTLPRR) lie on the Cytoplasmic side of the membrane. Residues 401 to 421 (YIIAGVLFWGGGVLLLIQVVP) form a helical membrane-spanning segment. The Extracellular portion of the chain corresponds to 422–428 (EDYNFVS). A helical membrane pass occupies residues 429–449 (IGLVMLGKFGITSAFSMLYVF). Residues 450-462 (TAELYPTLVRNMA) are Cytoplasmic-facing. A helical transmembrane segment spans residues 463–483 (VGITSMASRVGSIIAPYFVYL). At 484 to 488 (GAYNR) the chain is on the extracellular side. The chain crosses the membrane as a helical span at residues 489–509 (LLPYILMGSLTVLIGIITLFF). Residues 510–553 (PESFGVTLPENLEQMQKVRGFRCGKKSTVSVDREESPKVLITAF) are Cytoplasmic-facing.

It belongs to the major facilitator (TC 2.A.1) superfamily. Organic cation transporter (TC 2.A.1.19) family. Interacts with PDZK1. As to expression, expressed in kidney. Expressed in small intestines. Expressed in liver in non-parenchymal liver tissue such as sinusoidal vessels. Weakly expressed in lung and brain. Expressed in testis and spleen. Expressed in heart.

Its subcellular location is the apical cell membrane. It localises to the mitochondrion membrane. It is found in the basal cell membrane. It catalyses the reaction ergothioneine(out) + Na(+)(out) = ergothioneine(in) + Na(+)(in). The catalysed reaction is acetylcholine(in) = acetylcholine(out). It carries out the reaction (R)-carnitine(out) + Na(+)(out) = (R)-carnitine(in) + Na(+)(in). The enzyme catalyses glycine betaine(out) + Na(+)(out) = glycine betaine(in) + Na(+)(in). Its activity is regulated as follows. Allosterically activated by intracellular ATP. Transporter that mediates the transport of endogenous and microbial zwitterions and organic cations. Functions as a Na(+)-dependent and pH-dependent high affinity microbial symporter of potent food-derived antioxidant ergothioeine. Transports one sodium ion with one ergothioeine molecule. Involved in the absorption of ergothioneine from the luminal/apical side of the small intestine and renal tubular cells, and into non-parenchymal liver cells, thereby contributing to maintain steady-state ergothioneine level in the body. Also mediates the bidirectional transport of acetycholine, although the exact transport mechanism has not been fully identified yet. Most likely exports anti-inflammatory acetylcholine in non-neuronal tissues, thereby contributing to the non-neuronal cholinergic system. Displays a general physiological role linked to better survival by controlling inflammation and oxidative stress, which may be related to ergothioneine and acetycholine transports. May also function as a low-affinity Na(+)-dependent transporter of L-carnitine through the mitochondrial membrane, thereby maintaining intracellular carnitine homeostasis. May contribute to regulate the transport of cationic compounds in testis across the blood-testis-barrier. The protein is Solute carrier family 22 member 4 of Mus musculus (Mouse).